Reading from the N-terminus, the 81-residue chain is Acyl carrier protein (81 aa).

The 79-residue stretch at 1 to 79 (MDVAAMQVKI…DIFDYLAKNK (79 aa)) folds into the Carrier domain. An O-(pantetheine 4'-phosphoryl)serine modification is found at Ser39.

This sequence belongs to the acyl carrier protein (ACP) family. Post-translationally, 4'-phosphopantetheine is transferred from CoA to a specific serine of apo-ACP by AcpS. This modification is essential for activity because fatty acids are bound in thioester linkage to the sulfhydryl of the prosthetic group.

It localises to the cytoplasm. The protein operates within lipid metabolism; fatty acid biosynthesis. Functionally, carrier of the growing fatty acid chain in fatty acid biosynthesis. The chain is Acyl carrier protein from Syntrophobacter fumaroxidans (strain DSM 10017 / MPOB).